The primary structure comprises 151 residues: UPF0208 membrane protein plu3094 (151 aa).

2 helical membrane passes run 46 to 65 (FGIR…QIAL) and 69 to 91 (LGPA…WWLG).

It belongs to the UPF0208 family.

Its subcellular location is the cell inner membrane. The polypeptide is UPF0208 membrane protein plu3094 (Photorhabdus laumondii subsp. laumondii (strain DSM 15139 / CIP 105565 / TT01) (Photorhabdus luminescens subsp. laumondii)).